Consider the following 174-residue polypeptide: NADH-quinone oxidoreductase subunit I (174 aa).

2 consecutive 4Fe-4S ferredoxin-type domains span residues 61–91 (LTVKKDGSLRCTACMLCATNCPAECIKITAA) and 103–132 (ISYEIDILRCVFCGFCEEACPVDAIRLGPE). Residues cysteine 71, cysteine 74, cysteine 77, cysteine 81, cysteine 112, cysteine 115, cysteine 118, and cysteine 122 each coordinate [4Fe-4S] cluster.

Belongs to the complex I 23 kDa subunit family. NDH-1 is composed of 14 different subunits. Subunits NuoA, H, J, K, L, M, N constitute the membrane sector of the complex. The cofactor is [4Fe-4S] cluster.

The protein resides in the cell inner membrane. It catalyses the reaction a quinone + NADH + 5 H(+)(in) = a quinol + NAD(+) + 4 H(+)(out). In terms of biological role, NDH-1 shuttles electrons from NADH, via FMN and iron-sulfur (Fe-S) centers, to quinones in the respiratory chain. The immediate electron acceptor for the enzyme in this species is believed to be ubiquinone. Couples the redox reaction to proton translocation (for every two electrons transferred, four hydrogen ions are translocated across the cytoplasmic membrane), and thus conserves the redox energy in a proton gradient. The protein is NADH-quinone oxidoreductase subunit I of Bdellovibrio bacteriovorus (strain ATCC 15356 / DSM 50701 / NCIMB 9529 / HD100).